The primary structure comprises 91 residues: Sm-like protein LSM36B (91 aa).

The 73-residue stretch at 14 to 86 folds into the Sm domain; sequence TPADFLKSIR…VLYISTTKGT (73 aa).

This sequence belongs to the snRNP Sm proteins family. As to quaternary structure, component of the heptameric LSM1-LSM7 complex that forms a seven-membered ring structure with a donut shape. The LSM subunits are arranged in the order LSM1, LSM2, LSM3, LSM6, LSM5, LSM7 and LSM4. Component of the heptameric LSM2-LSM8 complex that forms a seven-membered ring structure with a donut shape. The LSM subunits are arranged in the order LSM8, LSM2, LSM3, LSM6, LSM5, LSM7 and LSM4. LSM6B subunit interacts only with its two neighboring subunits, LSM3A or LSM3B and LSM5. As to expression, expressed in roots, leaves, stems, flowers and siliques.

Its subcellular location is the cytoplasm. It localises to the nucleus. Component of LSM protein complexes, which are involved in RNA processing. Component of the cytoplasmic LSM1-LSM7 complex which is involved in mRNA degradation by promoting decapping and leading to accurate 5'-3' mRNA decay. The cytoplasmic LSM1-LSM7 complex regulates developmental gene expression by the decapping of specific development-related transcripts. Component of the nuclear LSM2-LSM8 complex which is involved splicing nuclear mRNAs. LSM2-LSM8 binds directly to the U6 small nuclear RNAs (snRNAs) and is essential for accurate splicing of selected development-related mRNAs through the stabilization of the spliceosomal U6 snRNA. Plays a critical role in the regulation of development-related gene expression. This chain is Sm-like protein LSM36B, found in Arabidopsis thaliana (Mouse-ear cress).